Reading from the N-terminus, the 343-residue chain is Phenylalanine--tRNA ligase alpha subunit (343 aa).

Mg(2+) is bound at residue E256.

The protein belongs to the class-II aminoacyl-tRNA synthetase family. Phe-tRNA synthetase alpha subunit type 1 subfamily. As to quaternary structure, tetramer of two alpha and two beta subunits. It depends on Mg(2+) as a cofactor.

The protein resides in the cytoplasm. It carries out the reaction tRNA(Phe) + L-phenylalanine + ATP = L-phenylalanyl-tRNA(Phe) + AMP + diphosphate + H(+). This is Phenylalanine--tRNA ligase alpha subunit from Aster yellows witches'-broom phytoplasma (strain AYWB).